The chain runs to 116 residues: LVLIAVERHQLIINPRGWRPSNRHAYVGIAVIWVLAVASSLPFLIYQVLTDEPFQNVTLDAFKDKYVCFDKFPSDSHRLSYTTLLLVLQYFGPLCFIFICYFKIYIRLKRRNNMMD.

The helical transmembrane segment at 1–6 (LVLIAV) threads the bilayer. The Cytoplasmic portion of the chain corresponds to 7–24 (ERHQLIINPRGWRPSNRH). The chain crosses the membrane as a helical span at residues 25 to 45 (AYVGIAVIWVLAVASSLPFLI). At 46 to 81 (YQVLTDEPFQNVTLDAFKDKYVCFDKFPSDSHRLSY) the chain is on the extracellular side. N56 carries N-linked (GlcNAc...) asparagine glycosylation. The helical transmembrane segment at 82–102 (TTLLLVLQYFGPLCFIFICYF) threads the bilayer. Residues 103–116 (KIYIRLKRRNNMMD) are Cytoplasmic-facing.

It belongs to the G-protein coupled receptor 1 family.

The protein localises to the cell membrane. Receptor for neuropeptide Y and peptide YY. This Ovis aries (Sheep) protein is Neuropeptide Y receptor type 1 (NPY1R).